A 517-amino-acid polypeptide reads, in one-letter code: GMP synthase [glutamine-hydrolyzing] (517 aa).

One can recognise a Glutamine amidotransferase type-1 domain in the interval 9–199 (RILILDFGSQ…VLGVCGCERL (191 aa)). The active-site Nucleophile is the C86. Residues H173 and E175 contribute to the active site. Positions 200 to 392 (WTSESIIEDA…LGLPYNMLYR (193 aa)) constitute a GMPS ATP-PPase domain. Position 227-233 (227-233 (SGGVDSS)) interacts with ATP.

Homodimer.

The catalysed reaction is XMP + L-glutamine + ATP + H2O = GMP + L-glutamate + AMP + diphosphate + 2 H(+). It participates in purine metabolism; GMP biosynthesis; GMP from XMP (L-Gln route): step 1/1. Catalyzes the synthesis of GMP from XMP. The protein is GMP synthase [glutamine-hydrolyzing] of Vibrio campbellii (strain ATCC BAA-1116).